The chain runs to 204 residues: Large ribosomal subunit protein eL15 (204 aa).

This sequence belongs to the eukaryotic ribosomal protein eL15 family. In terms of assembly, component of the large ribosomal subunit.

It localises to the cytoplasm. In terms of biological role, component of the large ribosomal subunit. The ribosome is a large ribonucleoprotein complex responsible for the synthesis of proteins in the cell. The polypeptide is Large ribosomal subunit protein eL15 (rpl15) (Hypophthalmichthys nobilis (Bighead carp)).